The following is a 381-amino-acid chain: Cytochrome b (381 aa).

4 helical membrane passes run 32–52 (GGSL…LLAM), 76–98 (MILR…LHVL), 113–133 (VWIS…IGYV), and 179–199 (FYSF…FHIA). 2 residues coordinate heme b: H82 and H96. Heme b-binding residues include H183 and H197. A ubiquinone is bound at residue H202. 4 consecutive transmembrane segments (helical) span residues 225–245 (FGAK…ILVF), 289–309 (AMGV…PFIG), 318–338 (ITEW…WLGG), and 345–365 (TSFV…VCQP).

It belongs to the cytochrome b family. The main subunits of complex b-c1 are: cytochrome b, cytochrome c1 and the Rieske protein. The cofactor is heme b.

The protein localises to the mitochondrion inner membrane. Functionally, component of the ubiquinol-cytochrome c reductase complex (complex III or cytochrome b-c1 complex) that is part of the mitochondrial respiratory chain. The b-c1 complex mediates electron transfer from ubiquinol to cytochrome c. Contributes to the generation of a proton gradient across the mitochondrial membrane that is then used for ATP synthesis. The protein is Cytochrome b (MT-CYB) of Chlamydomonas reinhardtii (Chlamydomonas smithii).